Consider the following 272-residue polypeptide: Ribosomal RNA small subunit methyltransferase A (272 aa).

6 residues coordinate S-adenosyl-L-methionine: Asn18, Leu20, Gly45, Glu66, Asp91, and Asn113.

The protein belongs to the class I-like SAM-binding methyltransferase superfamily. rRNA adenine N(6)-methyltransferase family. RsmA subfamily.

The protein localises to the cytoplasm. The enzyme catalyses adenosine(1518)/adenosine(1519) in 16S rRNA + 4 S-adenosyl-L-methionine = N(6)-dimethyladenosine(1518)/N(6)-dimethyladenosine(1519) in 16S rRNA + 4 S-adenosyl-L-homocysteine + 4 H(+). Specifically dimethylates two adjacent adenosines (A1518 and A1519) in the loop of a conserved hairpin near the 3'-end of 16S rRNA in the 30S particle. May play a critical role in biogenesis of 30S subunits. This is Ribosomal RNA small subunit methyltransferase A from Pectobacterium atrosepticum (strain SCRI 1043 / ATCC BAA-672) (Erwinia carotovora subsp. atroseptica).